A 112-amino-acid chain; its full sequence is T cell receptor alpha variable 34 (112 aa).

An N-terminal signal peptide occupies residues 1–21 (METVLQVLLGILGFQAAWVSS). The region spanning 22-112 (QELEQSPQSL…HAGIYLCGAD (91 aa)) is the Ig-like domain. N-linked (GlcNAc...) asparagine glycosylation is found at N38 and N42. The cysteines at positions 43 and 109 are disulfide-linked.

Alpha-beta TR is a heterodimer composed of an alpha and beta chain; disulfide-linked. The alpha-beta TR is associated with the transmembrane signaling CD3 coreceptor proteins to form the TR-CD3 (TcR or TCR). The assembly of alpha-beta TR heterodimers with CD3 occurs in the endoplasmic reticulum where a single alpha-beta TR heterodimer associates with one CD3D-CD3E heterodimer, one CD3G-CD3E heterodimer and one CD247 homodimer forming a stable octameric structure. CD3D-CD3E and CD3G-CD3E heterodimers preferentially associate with TR alpha and TR beta chains, respectively. The association of the CD247 homodimer is the last step of TcR assembly in the endoplasmic reticulum and is required for transport to the cell surface.

The protein localises to the cell membrane. In terms of biological role, v region of the variable domain of T cell receptor (TR) alpha chain that participates in the antigen recognition. Alpha-beta T cell receptors are antigen specific receptors which are essential to the immune response and are present on the cell surface of T lymphocytes. Recognize peptide-major histocompatibility (MH) (pMH) complexes that are displayed by antigen presenting cells (APC), a prerequisite for efficient T cell adaptive immunity against pathogens. Binding of alpha-beta TR to pMH complex initiates TR-CD3 clustering on the cell surface and intracellular activation of LCK that phosphorylates the ITAM motifs of CD3G, CD3D, CD3E and CD247 enabling the recruitment of ZAP70. In turn ZAP70 phosphorylates LAT, which recruits numerous signaling molecules to form the LAT signalosome. The LAT signalosome propagates signal branching to three major signaling pathways, the calcium, the mitogen-activated protein kinase (MAPK) kinase and the nuclear factor NF-kappa-B (NF-kB) pathways, leading to the mobilization of transcription factors that are critical for gene expression and essential for T cell growth and differentiation. The T cell repertoire is generated in the thymus, by V-(D)-J rearrangement. This repertoire is then shaped by intrathymic selection events to generate a peripheral T cell pool of self-MH restricted, non-autoaggressive T cells. Post-thymic interaction of alpha-beta TR with the pMH complexes shapes TR structural and functional avidity. The chain is T cell receptor alpha variable 34 from Homo sapiens (Human).